Here is a 439-residue protein sequence, read N- to C-terminus: ATP-dependent protease ATPase subunit HslU (439 aa).

ATP contacts are provided by residues Ile17, 59 to 64 (GVGKTE), Asp251, Glu317, and Arg389.

The protein belongs to the ClpX chaperone family. HslU subfamily. As to quaternary structure, a double ring-shaped homohexamer of HslV is capped on each side by a ring-shaped HslU homohexamer. The assembly of the HslU/HslV complex is dependent on binding of ATP.

It localises to the cytoplasm. Its function is as follows. ATPase subunit of a proteasome-like degradation complex; this subunit has chaperone activity. The binding of ATP and its subsequent hydrolysis by HslU are essential for unfolding of protein substrates subsequently hydrolyzed by HslV. HslU recognizes the N-terminal part of its protein substrates and unfolds these before they are guided to HslV for hydrolysis. The polypeptide is ATP-dependent protease ATPase subunit HslU (Campylobacter jejuni subsp. jejuni serotype O:23/36 (strain 81-176)).